The primary structure comprises 1226 residues: Methionine synthase (1226 aa).

Positions 7 to 327 (KVQIEKQLSE…EHIRQMALVV (321 aa)) constitute a Hcy-binding domain. 3 residues coordinate Zn(2+): cysteine 249, cysteine 312, and cysteine 313. A Pterin-binding domain is found at 358 to 619 (FINVGERTNV…VPEDLREAVE (262 aa)). The 95-residue stretch at 652-746 (SALEWRDWPV…FINASKEVGA (95 aa)) folds into the B12-binding N-terminal domain. Methylcob(III)alamin is bound by residues glutamate 696, 758–762 (GDVHD), histidine 761, serine 806, threonine 810, and alanine 862. Residues 748–883 (NGKILLATVK…SNELKPSFVE (136 aa)) enclose the B12-binding domain. Positions 899–1226 (KQPRTKPVTL…AEKWLGPNLN (328 aa)) constitute an AdoMet activation domain. S-adenosyl-L-methionine is bound by residues aspartate 949, arginine 1137, and 1192–1193 (YF).

This sequence belongs to the vitamin-B12 dependent methionine synthase family. It depends on methylcob(III)alamin as a cofactor. The cofactor is Zn(2+).

It carries out the reaction (6S)-5-methyl-5,6,7,8-tetrahydrofolate + L-homocysteine = (6S)-5,6,7,8-tetrahydrofolate + L-methionine. It functions in the pathway amino-acid biosynthesis; L-methionine biosynthesis via de novo pathway; L-methionine from L-homocysteine (MetH route): step 1/1. In terms of biological role, catalyzes the transfer of a methyl group from methyl-cobalamin to homocysteine, yielding enzyme-bound cob(I)alamin and methionine. Subsequently, remethylates the cofactor using methyltetrahydrofolate. The chain is Methionine synthase (metH) from Aliivibrio fischeri (Vibrio fischeri).